A 283-amino-acid chain; its full sequence is Transmembrane protein 119 (283 aa).

Residues 1 to 25 (MVSAAAPSLLILLLLLLGSVPATDA) form the signal peptide. Over 26–96 (RSVPLKATFL…IVDFFRQYVM (71 aa)) the chain is Extracellular. Residue Ser-41 is glycosylated (O-linked (Xyl...) (chondroitin sulfate) serine). The span at 43–52 (EAEGSSASSP) shows a compositional bias: low complexity. Positions 43–76 (EAEGSSASSPSLPPPWTPALSPTSMGPQPITLGG) are disordered. The chain crosses the membrane as a helical span at residues 97 to 117 (LIAVVGSLAFLLMFIVCAAVI). Residues 118 to 283 (TRQKQKASAY…CACSSVHPSV (166 aa)) are Cytoplasmic-facing. Disordered regions lie at residues 136-168 (KYVD…ALDS) and 183-283 (LKSP…HPSV). Composition is skewed to basic and acidic residues over residues 153-164 (VPDRAPDSRPEE) and 198-213 (RMVE…KGSQ). A compositionally biased stretch (low complexity) spans 238 to 264 (GVLEGAVVAGEGQGELEGSLLLAQEAQ). At Ser-272 the chain carries Phosphoserine.

In terms of assembly, interacts with SMAD1, SMAD5 and RUNX2. In terms of tissue distribution, expressed in brain microglia (at protein level). Detected in urine (at protein level). Elevated expression levels seen in the brain of patients with Alzheimer disease. Expressed by osteoblast-like cells in bone tissues and follicular dendritic cells in lymphoid tissues.

It localises to the cell membrane. The protein localises to the cytoplasm. Its subcellular location is the endoplasmic reticulum membrane. The protein resides in the secreted. Plays an important role in bone formation and normal bone mineralization. Promotes the differentiation of myoblasts into osteoblasts. May induce the commitment and differentiation of myoblasts into osteoblasts through an enhancement of BMP2 production and interaction with the BMP-RUNX2 pathway. Up-regulates the expression of ATF4, a transcription factor which plays a central role in osteoblast differentiation. Essential for normal spermatogenesis and late testicular differentiation. This Homo sapiens (Human) protein is Transmembrane protein 119 (TMEM119).